The primary structure comprises 199 residues: NAD(P)H dehydrogenase (quinone) (199 aa).

A Flavodoxin-like domain is found at 4-190 (VLVLYYSAYG…AGARYQGQVI (187 aa)). FMN-binding positions include 10-15 (SAYGHI) and 78-80 (TRF). Residue Tyr12 coordinates NAD(+). Trp98 contacts substrate. Residues 113-119 (STATQHG) and His134 contribute to the FMN site.

Belongs to the WrbA family. The cofactor is FMN.

It catalyses the reaction a quinone + NADH + H(+) = a quinol + NAD(+). The enzyme catalyses a quinone + NADPH + H(+) = a quinol + NADP(+). This chain is NAD(P)H dehydrogenase (quinone), found in Rhodopseudomonas palustris (strain BisA53).